A 346-amino-acid chain; its full sequence is DNA-directed RNA polymerase subunit alpha (346 aa).

Residues 1 to 242 form an alpha N-terminal domain (alpha-NTD) region; the sequence is MLIQDGDKLI…DQLSVFINFD (242 aa). The interval 258–346 is alpha C-terminal domain (alpha-CTD); the sequence is LNPNLFKSID…WLKRKEKNEA (89 aa).

The protein belongs to the RNA polymerase alpha chain family. As to quaternary structure, homodimer. The RNAP catalytic core consists of 2 alpha, 1 beta, 1 beta' and 1 omega subunit. When a sigma factor is associated with the core the holoenzyme is formed, which can initiate transcription.

The catalysed reaction is RNA(n) + a ribonucleoside 5'-triphosphate = RNA(n+1) + diphosphate. In terms of biological role, DNA-dependent RNA polymerase catalyzes the transcription of DNA into RNA using the four ribonucleoside triphosphates as substrates. This chain is DNA-directed RNA polymerase subunit alpha, found in Maridesulfovibrio salexigens (strain ATCC 14822 / DSM 2638 / NCIMB 8403 / VKM B-1763) (Desulfovibrio salexigens).